Here is a 288-residue protein sequence, read N- to C-terminus: B3 domain-containing protein At2g35310 (288 aa).

2 DNA-binding regions (TF-B3) span residues 19–114 (FFKV…FMQD) and 196–288 (AEFS…VSKP).

It is found in the nucleus. This chain is B3 domain-containing protein At2g35310, found in Arabidopsis thaliana (Mouse-ear cress).